A 247-amino-acid chain; its full sequence is Flavin-dependent thymidylate synthase (247 aa).

Residues 1–237 (MRVRLLEATE…PHTFEYYDAE (237 aa)) enclose the ThyX domain. Residues 85–88 (QLTR), 98–100 (SMR), and Arg176 each bind dUMP. FAD is bound at residue 88–90 (RHR). The short motif at 88-98 (RHRHASFDVQS) is the ThyX motif element. Residues 192–194 (NPR) and His198 contribute to the FAD site. Arg203 is a binding site for dUMP. Residue Arg203 is the Involved in ionization of N3 of dUMP, leading to its activation of the active site.

The protein belongs to the thymidylate synthase ThyX family. As to quaternary structure, homotetramer. It depends on FAD as a cofactor.

It catalyses the reaction dUMP + (6R)-5,10-methylene-5,6,7,8-tetrahydrofolate + NADPH + H(+) = dTMP + (6S)-5,6,7,8-tetrahydrofolate + NADP(+). It participates in pyrimidine metabolism; dTTP biosynthesis. Functionally, catalyzes the reductive methylation of 2'-deoxyuridine-5'-monophosphate (dUMP) to 2'-deoxythymidine-5'-monophosphate (dTMP) while utilizing 5,10-methylenetetrahydrofolate (mTHF) as the methyl donor, and NADPH and FADH(2) as the reductant. The chain is Flavin-dependent thymidylate synthase from Halobacterium salinarum (strain ATCC 700922 / JCM 11081 / NRC-1) (Halobacterium halobium).